Consider the following 361-residue polypeptide: tRNA/tmRNA (uracil-C(5))-methyltransferase (361 aa).

Gln185, Tyr213, Asn218, Glu234, and Asp294 together coordinate S-adenosyl-L-methionine. The active-site Nucleophile is Cys319. The active-site Proton acceptor is Glu353.

Belongs to the class I-like SAM-binding methyltransferase superfamily. RNA M5U methyltransferase family. TrmA subfamily.

It catalyses the reaction uridine(54) in tRNA + S-adenosyl-L-methionine = 5-methyluridine(54) in tRNA + S-adenosyl-L-homocysteine + H(+). It carries out the reaction uridine(341) in tmRNA + S-adenosyl-L-methionine = 5-methyluridine(341) in tmRNA + S-adenosyl-L-homocysteine + H(+). Dual-specificity methyltransferase that catalyzes the formation of 5-methyluridine at position 54 (m5U54) in all tRNAs, and that of position 341 (m5U341) in tmRNA (transfer-mRNA). In Pseudomonas entomophila (strain L48), this protein is tRNA/tmRNA (uracil-C(5))-methyltransferase.